The following is a 244-amino-acid chain: rRNA adenine N-6-methyltransferase (244 aa).

Residues N11, I13, G38, E59, D84, and N101 each contribute to the S-adenosyl-L-methionine site.

It belongs to the class I-like SAM-binding methyltransferase superfamily. rRNA adenine N(6)-methyltransferase family.

It catalyses the reaction adenosine(2085) in 23S rRNA + 2 S-adenosyl-L-methionine = N(6)-dimethyladenosine(2085) in 23S rRNA + 2 S-adenosyl-L-homocysteine + 2 H(+). Its function is as follows. This protein produces a dimethylation of the adenine residue at position 2085 in 23S rRNA, resulting in reduced affinity between ribosomes and macrolide-lincosamide-streptogramin B antibiotics. This Staphylococcus epidermidis protein is rRNA adenine N-6-methyltransferase (ermM).